We begin with the raw amino-acid sequence, 283 residues long: Thymidylate synthase (283 aa).

A dUMP-binding site is contributed by arginine 22. The active-site Nucleophile is cysteine 160. Residues 180 to 183 (RSCD), asparagine 191, and 221 to 223 (HIY) each bind dUMP. Aspartate 183 serves as a coordination point for (6R)-5,10-methylene-5,6,7,8-tetrahydrofolate. (6R)-5,10-methylene-5,6,7,8-tetrahydrofolate is bound at residue serine 282.

The protein belongs to the thymidylate synthase family. Bacterial-type ThyA subfamily. Homodimer.

The protein resides in the cytoplasm. It catalyses the reaction dUMP + (6R)-5,10-methylene-5,6,7,8-tetrahydrofolate = 7,8-dihydrofolate + dTMP. It functions in the pathway pyrimidine metabolism; dTTP biosynthesis. Catalyzes the reductive methylation of 2'-deoxyuridine-5'-monophosphate (dUMP) to 2'-deoxythymidine-5'-monophosphate (dTMP) while utilizing 5,10-methylenetetrahydrofolate (mTHF) as the methyl donor and reductant in the reaction, yielding dihydrofolate (DHF) as a by-product. This enzymatic reaction provides an intracellular de novo source of dTMP, an essential precursor for DNA biosynthesis. The sequence is that of Thymidylate synthase from Vibrio cholerae serotype O1 (strain ATCC 39541 / Classical Ogawa 395 / O395).